Reading from the N-terminus, the 108-residue chain is Insulin (108 aa).

An N-terminal signal peptide occupies residues 1–24 (MALWMHLLPLLALLALWGPEPAPA). Cystine bridges form between Cys31-Cys94, Cys43-Cys107, and Cys93-Cys98. Residues 57–85 (EAEDLQVGQVELGGGSITGSLPPLEGPMQ) constitute a propeptide, c peptide.

The protein belongs to the insulin family. In terms of assembly, heterodimer of a B chain and an A chain linked by two disulfide bonds.

Its subcellular location is the secreted. In terms of biological role, insulin decreases blood glucose concentration. It increases cell permeability to monosaccharides, amino acids and fatty acids. It accelerates glycolysis, the pentose phosphate cycle, and glycogen synthesis in liver. The polypeptide is Insulin (INS) (Aotus trivirgatus (Three-striped night monkey)).